A 562-amino-acid polypeptide reads, in one-letter code: Probable sesquiterpene synthase (562 aa).

Residues aspartate 315, aspartate 319, and glutamate 467 each contribute to the Mg(2+) site. The DDXXD motif motif lies at 315–319 (DDIYD).

Belongs to the terpene synthase family. Tpsa subfamily. Mg(2+) serves as cofactor. The cofactor is Mn(2+).

Its function is as follows. Sesquiterpene synthase. The sequence is that of Probable sesquiterpene synthase (SesquiTPS) from Santalum spicatum (Australian sandalwood).